Consider the following 354-residue polypeptide: Dye-decolorizing peroxidase (354 aa).

Asp-165 functions as the Proton acceptor in the catalytic mechanism. Residue His-238 participates in heme binding. A targeting peptide region spans residues 312 to 335 (GLFFSPTVDFLDDPPPLPAPGTPA). Residues 324–337 (DPPPLPAPGTPAAP) are compositionally biased toward pro residues. The interval 324-354 (DPPPLPAPGTPAAPPARNGSLSIGSLKGTTR) is disordered. The segment covering 342–354 (GSLSIGSLKGTTR) has biased composition (polar residues).

It belongs to the DyP-type peroxidase family. In terms of assembly, found in a complex with type 1 encapsulin, strongly suggesting it is found in a type 1 encapsulin nanocompartment. Homotetramer, presumably also in the type 1 encapsulin nanocompartment. It depends on heme b as a cofactor.

It localises to the encapsulin nanocompartment. The protein localises to the cell membrane. The enzyme catalyses 2 a phenolic donor + H2O2 = 2 a phenolic radical donor + 2 H2O. Its function is as follows. Cargo protein of a type 1 encapsulin nanocompartment. A heme-dependent peroxidase. This cargo-loaded encapsulin nanocompartment is probably involved in protection against oxidative damage. This is Dye-decolorizing peroxidase from Mycolicibacterium paratuberculosis (strain ATCC BAA-968 / K-10) (Mycobacterium paratuberculosis).